Here is a 221-residue protein sequence, read N- to C-terminus: MALQLKHITKTFGNGDAQTEVLKNINFSVNQGEFIILSGASGSGKSTLLNILGGLLSPSSGDVLYKGENLFSKEVDKTSLRLNDIGFIFQSSHLVPYLTVREQLMIVAKEAGIKRKEAKDKAQRLLNEIGLSHRLDVYPHLLSGGEKQRVAIMRAFMNEPKIILADEPTASLDADRATSVVQMIKAHVQTKNMIGIMITHDKRLFEYADRVIEIQDGKIEL.

An ABC transporter domain is found at 3-221 (LQLKHITKTF…IEIQDGKIEL (219 aa)). 39–46 (GASGSGKS) is an ATP binding site.

It belongs to the ABC transporter superfamily. HrtA family. In terms of assembly, the complex is composed of two ATP-binding proteins (HrtA), two transmembrane proteins (HrtB) and a solute-binding protein.

The protein localises to the cell membrane. Part of the ABC transporter complex hrt involved in hemin import. Responsible for energy coupling to the transport system. The chain is Putative hemin import ATP-binding protein HrtA (hrtA) from Staphylococcus haemolyticus (strain JCSC1435).